A 204-amino-acid chain; its full sequence is Ras-related protein Rab-7L1 (204 aa).

GTP contacts are provided by serine 33, lysine 34, histidine 35, tyrosine 36, lysine 37, and threonine 39. Residues 36 to 44 carry the Effector region motif; the sequence is YKSTVGVDF. A Phosphothreonine; by LRRK2 modification is found at threonine 71. Position 72 is a phosphoserine (serine 72). 3 residues coordinate GTP: lysine 126, valine 156, and lysine 157. 2 S-geranylgeranyl cysteine lipidation sites follow: cysteine 203 and cysteine 204.

It belongs to the small GTPase superfamily. Rab family. As to quaternary structure, interacts with LRRK2 (via the N-terminus); this interaction is direct and stimulates kinase activity. As to expression, expressed predominantly in kidney and much less in brain, heart, muscle, fat, liver, spleen, adrenal gland, ovary, thymus and lung. Not expressed in testis and intestine.

The protein localises to the cell membrane. The protein resides in the cytoplasm. It is found in the perinuclear region. Its subcellular location is the golgi apparatus. It localises to the golgi apparatus membrane. The protein localises to the trans-Golgi network. The protein resides in the cytoskeleton. Functionally, the small GTPases Rab are key regulators in vesicle trafficking. Essential for maintaining the integrity of endosome-trans-Golgi network structure. Together with LRRK2, plays a role in the retrograde trafficking pathway for recycling proteins, such as mannose 6 phosphate receptor (M6PR), between lysosomes and the Golgi apparatus in a retromer-dependent manner. Recruits LRRK2 to the Golgi apparatus and stimulates LRRK2 kinase activity. Stimulates phosphorylation of RAB10 'Thr-73' by LRRK2. Regulates also neuronal process morphology in the intact central nervous system (CNS). The chain is Ras-related protein Rab-7L1 (Rab29) from Rattus norvegicus (Rat).